Reading from the N-terminus, the 733-residue chain is Phosphoribosylformylglycinamidine synthase subunit PurL (733 aa).

H32 is a catalytic residue. Y35 is an ATP binding site. E81 provides a ligand contact to Mg(2+). Residues 82–85 and R104 each bind substrate; that span reads SHNH. The active-site Proton acceptor is the H83. Position 105 (D105) interacts with Mg(2+). Residue Q230 participates in substrate binding. D258 contributes to the Mg(2+) binding site. 301 to 303 lines the substrate pocket; sequence ESQ. Positions 482 and 519 each coordinate ATP. N520 contributes to the Mg(2+) binding site. S522 contributes to the substrate binding site.

Belongs to the FGAMS family. Monomer. Part of the FGAM synthase complex composed of 1 PurL, 1 PurQ and 2 PurS subunits.

It is found in the cytoplasm. The enzyme catalyses N(2)-formyl-N(1)-(5-phospho-beta-D-ribosyl)glycinamide + L-glutamine + ATP + H2O = 2-formamido-N(1)-(5-O-phospho-beta-D-ribosyl)acetamidine + L-glutamate + ADP + phosphate + H(+). It participates in purine metabolism; IMP biosynthesis via de novo pathway; 5-amino-1-(5-phospho-D-ribosyl)imidazole from N(2)-formyl-N(1)-(5-phospho-D-ribosyl)glycinamide: step 1/2. Part of the phosphoribosylformylglycinamidine synthase complex involved in the purines biosynthetic pathway. Catalyzes the ATP-dependent conversion of formylglycinamide ribonucleotide (FGAR) and glutamine to yield formylglycinamidine ribonucleotide (FGAM) and glutamate. The FGAM synthase complex is composed of three subunits. PurQ produces an ammonia molecule by converting glutamine to glutamate. PurL transfers the ammonia molecule to FGAR to form FGAM in an ATP-dependent manner. PurS interacts with PurQ and PurL and is thought to assist in the transfer of the ammonia molecule from PurQ to PurL. This Methanocaldococcus jannaschii (strain ATCC 43067 / DSM 2661 / JAL-1 / JCM 10045 / NBRC 100440) (Methanococcus jannaschii) protein is Phosphoribosylformylglycinamidine synthase subunit PurL.